A 303-amino-acid chain; its full sequence is D-alanine--D-alanine ligase (303 aa).

The ATP-grasp domain occupies 99–293 (TYRFLKDIVE…FEELVEIILK (195 aa)). An ATP-binding site is contributed by 125-176 (GYPCVVKPRREGSSIGVFICESDEEFQHALKEDLPRYGSVIVQKYIPGREMT). Mg(2+)-binding residues include Asp-248, Glu-260, and Asn-262.

It belongs to the D-alanine--D-alanine ligase family. The cofactor is Mg(2+). Requires Mn(2+) as cofactor.

The protein localises to the cytoplasm. It carries out the reaction 2 D-alanine + ATP = D-alanyl-D-alanine + ADP + phosphate + H(+). It participates in cell wall biogenesis; peptidoglycan biosynthesis. Functionally, cell wall formation. In Thermotoga petrophila (strain ATCC BAA-488 / DSM 13995 / JCM 10881 / RKU-1), this protein is D-alanine--D-alanine ligase.